Here is a 349-residue protein sequence, read N- to C-terminus: Glycerol-3-phosphate dehydrogenase [NAD(+)], cytoplasmic (349 aa).

Gly-10–Gly-15 provides a ligand contact to NAD(+). A substrate-binding site is contributed by Lys-120. Ala-153 lines the NAD(+) pocket. The residue at position 154 (Ser-154) is a Phosphoserine. Lys-204 serves as the catalytic Proton acceptor. NAD(+) is bound at residue Arg-269. Arg-269 to Asn-270 provides a ligand contact to substrate. Lys-289 carries the post-translational modification N6-succinyllysine. Residues Lys-296 and Gln-298 each coordinate NAD(+). Tyr-326 is modified (phosphotyrosine).

This sequence belongs to the NAD-dependent glycerol-3-phosphate dehydrogenase family. Homodimer.

Its subcellular location is the cytoplasm. It catalyses the reaction sn-glycerol 3-phosphate + NAD(+) = dihydroxyacetone phosphate + NADH + H(+). Its function is as follows. Has glycerol-3-phosphate dehydrogenase activity. The chain is Glycerol-3-phosphate dehydrogenase [NAD(+)], cytoplasmic from Mus musculus (Mouse).